We begin with the raw amino-acid sequence, 352 residues long: Transcription factor MYB51 (352 aa).

HTH myb-type domains follow at residues 10–62 and 63–117; these read ELGL…ANYL and RPDI…KKRL. 2 consecutive DNA-binding regions (H-T-H motif) follow at residues 38-62 and 90-113; these read WRTL…ANYL and WSAI…NTHI. Disordered stretches follow at residues 128–157 and 198–219; these read KGIT…DLDN and GGPL…SVDS. Positions 203-219 are enriched in low complexity; it reads STSHTTNTTTTSVSVDS.

As to quaternary structure, can form complexes with MYC2, MYC3 or MYC4. Expressed in vegetative parts of the plant, mainly in mature rosette leaves and in trichomes. Detected in roots, but not in mature flowers or siliques.

It is found in the nucleus. Transcription factor positively regulating indolic glucosinolate biosynthetic pathway genes. The protein is Transcription factor MYB51 (MYB51) of Arabidopsis thaliana (Mouse-ear cress).